The primary structure comprises 549 residues: SH3 domain-containing protein 21 (549 aa).

The interval 1 to 56 (MVQSELQLQPRAGRRADASNWGDFGSDKGGLGNTDIPPITPNSQRPPKLSNLTYDS) is disordered. Positions 41–54 (PNSQRPPKLSNLTY) are enriched in polar residues. Residues 65-126 (SCPETCRVLF…PDNFVIPPPP (62 aa)) enclose the SH3 domain. Disordered regions lie at residues 142–303 (PIKE…KPAK) and 332–479 (FKKE…KSKN). Residues 211 to 220 (QASQQHSASS) are compositionally biased toward low complexity. Composition is skewed to basic and acidic residues over residues 267 to 280 (PVPK…KIPA) and 332 to 342 (FKKEPSRDNDQ). Composition is skewed to polar residues over residues 343 to 365 (CQHL…NNIQ) and 439 to 456 (VLPQ…TIQQ). A coiled-coil region spans residues 482–510 (MDVLESLKEEVGLLRSRLELLELKLEQKM). The interval 528–549 (QMMQRNRKSFKHAETQTETQTE) is disordered.

This is SH3 domain-containing protein 21 (Sh3d21) from Mus musculus (Mouse).